The following is a 198-amino-acid chain: Sorcin (198 aa).

4 consecutive EF-hand domains span residues 45–64 (QDGQ…SGIA), 70–98 (FNLE…FKEL), 100–135 (AVLN…MGFR), and 151–169 (SGKI…LRAL). Ca(2+) contacts are provided by D83, D85, S87, T89, E94, D113, D115, S117, T119, and E124. S178 is modified (phosphoserine).

As to quaternary structure, homodimer. Interacts with GCA, RYR2 and ANXA7. As to expression, detected in cardiac myocytes.

It localises to the cytoplasm. The protein localises to the sarcoplasmic reticulum membrane. Its function is as follows. Calcium-binding protein that modulates excitation-contraction coupling in the heart. Contributes to calcium homeostasis in the heart sarcoplasmic reticulum. Modulates the activity of RYR2 calcium channels. This chain is Sorcin (Sri), found in Mus musculus (Mouse).